The primary structure comprises 545 residues: Glucose-6-phosphate isomerase (545 aa).

The active-site Proton donor is the glutamate 351. Active-site residues include histidine 382 and lysine 510.

This sequence belongs to the GPI family.

It localises to the cytoplasm. It catalyses the reaction alpha-D-glucose 6-phosphate = beta-D-fructose 6-phosphate. It participates in carbohydrate biosynthesis; gluconeogenesis. It functions in the pathway carbohydrate degradation; glycolysis; D-glyceraldehyde 3-phosphate and glycerone phosphate from D-glucose: step 2/4. In terms of biological role, catalyzes the reversible isomerization of glucose-6-phosphate to fructose-6-phosphate. The chain is Glucose-6-phosphate isomerase from Shewanella pealeana (strain ATCC 700345 / ANG-SQ1).